The following is a 208-amino-acid chain: Uracil phosphoribosyltransferase (208 aa).

5-phospho-alpha-D-ribose 1-diphosphate contacts are provided by residues arginine 78, arginine 103, and 130-138; that span reads DPMLATGGS. Uracil-binding positions include isoleucine 193 and 198–200; that span reads GDA. Aspartate 199 serves as a coordination point for 5-phospho-alpha-D-ribose 1-diphosphate.

Belongs to the UPRTase family. Mg(2+) is required as a cofactor.

It carries out the reaction UMP + diphosphate = 5-phospho-alpha-D-ribose 1-diphosphate + uracil. It participates in pyrimidine metabolism; UMP biosynthesis via salvage pathway; UMP from uracil: step 1/1. Its activity is regulated as follows. Allosterically activated by GTP. Functionally, catalyzes the conversion of uracil and 5-phospho-alpha-D-ribose 1-diphosphate (PRPP) to UMP and diphosphate. In Neisseria gonorrhoeae (strain ATCC 700825 / FA 1090), this protein is Uracil phosphoribosyltransferase.